Consider the following 208-residue polypeptide: 3-demethoxyubiquinol 3-hydroxylase (208 aa).

Fe cation contacts are provided by glutamate 57, glutamate 87, histidine 90, glutamate 139, glutamate 171, and histidine 174.

Belongs to the COQ7 family. It depends on Fe cation as a cofactor.

The protein localises to the cell membrane. It catalyses the reaction a 5-methoxy-2-methyl-3-(all-trans-polyprenyl)benzene-1,4-diol + AH2 + O2 = a 3-demethylubiquinol + A + H2O. It participates in cofactor biosynthesis; ubiquinone biosynthesis. Catalyzes the hydroxylation of 2-nonaprenyl-3-methyl-6-methoxy-1,4-benzoquinol during ubiquinone biosynthesis. This chain is 3-demethoxyubiquinol 3-hydroxylase, found in Burkholderia ambifaria (strain ATCC BAA-244 / DSM 16087 / CCUG 44356 / LMG 19182 / AMMD) (Burkholderia cepacia (strain AMMD)).